The following is a 312-amino-acid chain: MKVAVLGAAGGIGQALALLLKTQLPSGSELSLYDIAPVTPGVAVDLSHIPTEVKIKGFAGEDATPALEGANVVLISAGVARKPGMDRSDLFNINAGIVRNLVEQVAKTCPKSLIGIITNPVNTTVAIAAEVLKKAGVYDKNRLFGVTTLDVIRSNTFVAELKGKKPQEIEVPVIGGHSGVTILPLLSQIPGVNFTDGELAALTKRIQNAGTEVVEAKAGGGSATLSMGQAAARLGLSLVRGLQGESDVVECAYVEGDGKYARFFAQPVRLGKNGVEERLNIGELSDFEQKALEGMLDVLRKDIELGEKFINN.

Residues 7 to 13 and Asp-34 each bind NAD(+); that span reads GAAGGIG. The substrate site is built by Arg-81 and Arg-87. Residues Asn-94 and 117–119 contribute to the NAD(+) site; that span reads ITN. The substrate site is built by Asn-119 and Arg-153. Residue His-177 is the Proton acceptor of the active site. Position 227 (Met-227) interacts with NAD(+).

Belongs to the LDH/MDH superfamily. MDH type 1 family. In terms of assembly, homodimer.

The catalysed reaction is (S)-malate + NAD(+) = oxaloacetate + NADH + H(+). Catalyzes the reversible oxidation of malate to oxaloacetate. This Photorhabdus laumondii subsp. laumondii (strain DSM 15139 / CIP 105565 / TT01) (Photorhabdus luminescens subsp. laumondii) protein is Malate dehydrogenase.